We begin with the raw amino-acid sequence, 458 residues long: Exodeoxyribonuclease 7 large subunit (458 aa).

Belongs to the XseA family. In terms of assembly, heterooligomer composed of large and small subunits.

The protein localises to the cytoplasm. It carries out the reaction Exonucleolytic cleavage in either 5'- to 3'- or 3'- to 5'-direction to yield nucleoside 5'-phosphates.. Functionally, bidirectionally degrades single-stranded DNA into large acid-insoluble oligonucleotides, which are then degraded further into small acid-soluble oligonucleotides. This chain is Exodeoxyribonuclease 7 large subunit, found in Serratia proteamaculans (strain 568).